Here is a 73-residue protein sequence, read N- to C-terminus: uncharacterized protein (73 aa).

This is an uncharacterized protein from Saccharomyces cerevisiae (strain ATCC 204508 / S288c) (Baker's yeast).